A 287-amino-acid chain; its full sequence is Phosphate transport system permease protein PstA (287 aa).

Helical transmembrane passes span 22-42 (ISCIAALFGLFFLIWILWTLI), 70-90 (AFLGSAIMCLLAIVIGTPVGI), 115-135 (ILLSAPSIVLGLFVYTLYVMH), 138-158 (GHFSAFSGALALVFIVLPIVV), 199-219 (ILTGILLALARISGETAPLLF), and 255-275 (LLAWSGALVLTVFVLLVSLGA). In terms of domain architecture, ABC transmembrane type-1 spans 71 to 279 (FLGSAIMCLL…LVSLGARALL (209 aa)).

The protein belongs to the binding-protein-dependent transport system permease family. CysTW subfamily.

It is found in the cell inner membrane. Functionally, part of a binding-protein-dependent transport system for phosphate; probably responsible for the translocation of the substrate across the membrane. The sequence is that of Phosphate transport system permease protein PstA (pstA) from Xylella fastidiosa (strain Temecula1 / ATCC 700964).